The sequence spans 367 residues: Putative 12-oxophytodienoate reductase 11 (367 aa).

Residues 26 to 28 (PLT), Ala59, and Gln101 contribute to the FMN site. Residue 178–181 (HGAH) coordinates substrate. Tyr183 serves as the catalytic Proton donor. Arg230 contributes to the FMN binding site. Arg270 contributes to the substrate binding site. Residues Gly300 and 321 to 322 (GR) each bind FMN.

It belongs to the NADH:flavin oxidoreductase/NADH oxidase family. FMN is required as a cofactor.

Putative oxophytodienoate reductase that may be involved in the biosynthesis or metabolism of oxylipin signaling molecules. The protein is Putative 12-oxophytodienoate reductase 11 (OPR11) of Oryza sativa subsp. japonica (Rice).